We begin with the raw amino-acid sequence, 279 residues long: Putative pyruvate, phosphate dikinase regulatory protein (279 aa).

153 to 160 (GISRTSKT) contacts ADP.

Belongs to the pyruvate, phosphate/water dikinase regulatory protein family. PDRP subfamily.

It catalyses the reaction N(tele)-phospho-L-histidyl/L-threonyl-[pyruvate, phosphate dikinase] + ADP = N(tele)-phospho-L-histidyl/O-phospho-L-threonyl-[pyruvate, phosphate dikinase] + AMP + H(+). The catalysed reaction is N(tele)-phospho-L-histidyl/O-phospho-L-threonyl-[pyruvate, phosphate dikinase] + phosphate + H(+) = N(tele)-phospho-L-histidyl/L-threonyl-[pyruvate, phosphate dikinase] + diphosphate. Functionally, bifunctional serine/threonine kinase and phosphorylase involved in the regulation of the pyruvate, phosphate dikinase (PPDK) by catalyzing its phosphorylation/dephosphorylation. This chain is Putative pyruvate, phosphate dikinase regulatory protein, found in Bartonella bacilliformis (strain ATCC 35685 / KC583 / Herrer 020/F12,63).